Here is a 270-residue protein sequence, read N- to C-terminus: Fructose-2,6-bisphosphatase TIGAR (270 aa).

The active-site Tele-phosphohistidine intermediate is the His-11. At Lys-50 the chain carries N6-acetyllysine. Glu-89 (proton donor/acceptor) is an active-site residue.

The protein belongs to the phosphoglycerate mutase family. Interacts with HK2; the interaction increases hexokinase HK2 activity in a hypoxia- and HIF1A-dependent manner, resulting in the regulation of mitochondrial membrane potential, thus increasing NADPH production and decreasing intracellular ROS levels.

Its subcellular location is the cytoplasm. The protein resides in the nucleus. The protein localises to the mitochondrion. It carries out the reaction beta-D-fructose 2,6-bisphosphate + H2O = beta-D-fructose 6-phosphate + phosphate. Its function is as follows. Fructose-bisphosphatase hydrolyzing fructose-2,6-bisphosphate as well as fructose-1,6-bisphosphate. Acts as a negative regulator of glycolysis by lowering intracellular levels of fructose-2,6-bisphosphate in a p53/TP53-dependent manner, resulting in the pentose phosphate pathway (PPP) activation and NADPH production. Contributes to the generation of reduced glutathione to cause a decrease in intracellular reactive oxygen species (ROS) content, correlating with its ability to protect cells from oxidative or metabolic stress-induced cell death. Plays a role in promoting protection against cell death during hypoxia by decreasing mitochondria ROS levels in a HK2-dependent manner through a mechanism that is independent of its fructose-bisphosphatase activity. In response to cardiac damage stress, mediates p53-induced inhibition of myocyte mitophagy through ROS levels reduction and the subsequent inactivation of BNIP3. Reduced mitophagy results in an enhanced apoptotic myocyte cell death, and exacerbates cardiac damage. Plays a role in adult intestinal regeneration; contributes to the growth, proliferation and survival of intestinal crypts following tissue ablation. Plays a neuroprotective role against ischemic brain damage by enhancing PPP flux and preserving mitochondria functions. Protects glioma cells from hypoxia- and ROS-induced cell death by inhibiting glycolysis and activating mitochondrial energy metabolism and oxygen consumption in a TKTL1-dependent and p53/TP53-independent manner. Plays a role in cancer cell survival by promoting DNA repair through activating PPP flux in a CDK5-ATM-dependent signaling pathway during hypoxia and/or genome stress-induced DNA damage responses. Involved in intestinal tumor progression. The chain is Fructose-2,6-bisphosphatase TIGAR from Bos taurus (Bovine).